A 77-amino-acid polypeptide reads, in one-letter code: U8-lycotoxin-Ls1o (77 aa).

An N-terminal signal peptide occupies residues 1 to 20 (MKLMIFTGLVLFAIVSLIEA). Positions 21–26 (QAENGK) are excised as a propeptide.

The protein belongs to the neurotoxin 19 (CSTX) family. 08 (U8-Lctx) subfamily. Contains 4 disulfide bonds. Expressed by the venom gland.

The protein resides in the secreted. This chain is U8-lycotoxin-Ls1o, found in Lycosa singoriensis (Wolf spider).